The primary structure comprises 172 residues: Shikimate kinase (172 aa).

14-19 (GAGKST) is an ATP binding site. Ser18 is a Mg(2+) binding site. Positions 36, 60, and 82 each coordinate substrate. Arg120 lines the ATP pocket. Residue Arg140 coordinates substrate.

Belongs to the shikimate kinase family. Monomer. Requires Mg(2+) as cofactor.

It localises to the cytoplasm. The enzyme catalyses shikimate + ATP = 3-phosphoshikimate + ADP + H(+). It participates in metabolic intermediate biosynthesis; chorismate biosynthesis; chorismate from D-erythrose 4-phosphate and phosphoenolpyruvate: step 5/7. In terms of biological role, catalyzes the specific phosphorylation of the 3-hydroxyl group of shikimic acid using ATP as a cosubstrate. The polypeptide is Shikimate kinase (Tolumonas auensis (strain DSM 9187 / NBRC 110442 / TA 4)).